The sequence spans 87 residues: Small ribosomal subunit protein bS20 (87 aa).

The disordered stretch occupies residues 1–22; sequence MAHHKSAIKRIKQNAKKNARNR.

It belongs to the bacterial ribosomal protein bS20 family.

Functionally, binds directly to 16S ribosomal RNA. This is Small ribosomal subunit protein bS20 from Pelobacter propionicus (strain DSM 2379 / NBRC 103807 / OttBd1).